The sequence spans 1135 residues: Putative beta-hexosaminidase (1135 aa).

A signal peptide spans 1-23; it reads MKWVKSGVGILGILLTICHAVTS. 2 disordered regions span residues 970-1082 and 1107-1135; these read AHPP…LPGQ and QMRG…QQAG. The span at 986-1003 shows a compositional bias: pro residues; sequence NMPPPFPPRPPFGPPMLP. Low complexity-rich tracts occupy residues 1004 to 1026 and 1043 to 1073; these read PGQM…TALG and TGQA…LPGQ.

It belongs to the glycosyl hydrolase 20 family. As to expression, prismatic layer of shell (at protein level). Expressed primarily in the mantle with highest level in the mantle edge and lower level in the mantle pallium.

The protein localises to the secreted. It catalyses the reaction Hydrolysis of terminal non-reducing N-acetyl-D-hexosamine residues in N-acetyl-beta-D-hexosaminides.. It participates in glycan degradation; chitin degradation. This chain is Putative beta-hexosaminidase, found in Margaritifera margaritifera (Freshwater pearl mussel).